A 165-amino-acid chain; its full sequence is Transcription antitermination protein NusB (165 aa).

The protein belongs to the NusB family.

Involved in transcription antitermination. Required for transcription of ribosomal RNA (rRNA) genes. Binds specifically to the boxA antiterminator sequence of the ribosomal RNA (rrn) operons. The protein is Transcription antitermination protein NusB of Bradyrhizobium diazoefficiens (strain JCM 10833 / BCRC 13528 / IAM 13628 / NBRC 14792 / USDA 110).